Reading from the N-terminus, the 10287-residue chain is Putative E3 ubiquitin-protein ligase protein PFF1365c (10287 aa).

Residues 47–82 form a TPR 1 repeat; it reads TRFFKSISNYGEFLLLQSSSRVISSYEHILRLLHQA. A compositionally biased stretch (low complexity) spans 566 to 589; sequence TNKSRDNINQNTNTNNNNNNNNNN. A disordered region spans residues 566–592; it reads TNKSRDNINQNTNTNNNNNNNNNNDGD. One copy of the TPR 2 repeat lies at 631 to 665; that stretch reads YPMFLKIQNKPQRCLKDISKPCEYYSNTLPIYGSY. Disordered regions lie at residues 740–823, 1221–1251, and 1599–1670; these read KSSV…NKKK, NNSNYNDNSHYTHNSLKSQNISSSTYSSSSS, and YVDD…DDNN. Composition is skewed to low complexity over residues 767–810, 1221–1235, and 1242–1251; these read KANN…NNNN, NNSNYNDNSHYTHNS, and SSSTYSSSSS. Residues 1601 to 1635 show a composition bias toward acidic residues; the sequence is DDNEEDEGEEDKSEDYEYCDDEQQNDVYEDTEEES. Over residues 1641-1653 the composition is skewed to basic residues; sequence RKERRVHQKKKNS. The segment covering 1654–1670 has biased composition (low complexity); sequence KVSINKKTNNSLSDDNN. A run of 3 helical transmembrane segments spans residues 1821–1841, 1860–1880, and 1900–1920; these read ACTFIISGIIPCLGYVTTLFV, LKMALNIWPMFLKITLQGLLT, and ECCISITSLATHFLTLFTIMI. The segment covering 2070-2080 has biased composition (basic residues); the sequence is SRRGIPLKKKS. The segment at 2070–2112 is disordered; it reads SRRGIPLKKKSERNNSKEENVNNMDHNNNNNSNSNNNNFFHRG. A compositionally biased stretch (low complexity) spans 2090–2107; the sequence is VNNMDHNNNNNSNSNNNN. The ANK 1 repeat unit spans residues 2116-2145; it reads TNPRNNNITCDRKNMEFLKKLMKNDHDAVQ. One copy of the TPR 3 repeat lies at 2141 to 2175; the sequence is HDAVQCLGKAYSVFHKNFERAQIAFVAVFLHLTGY. A compositionally biased stretch (polar residues) spans 2854-2865; the sequence is NLSSNKRSQKGY. Disordered stretches follow at residues 2854-2945, 3087-3113, 3303-3344, 3561-3599, 3942-3998, 4076-4157, 4695-4716, 4886-4972, and 4984-5051; these read NLSS…SKEP, KNRNSNNNNNNNNTNNSNNSNNNNNIN, NGHT…NDRG, FSKGKQKKEMQENEDEKIKNKGKNKTKTNDDKKKNSSIN, TMEN…KDHI, LFNS…INYY, EKKNFQDDSIMSNRQSDNKEEG, SPYF…LRNS, and YRNK…SNAD. The span at 2886–2929 shows a compositional bias: basic and acidic residues; sequence SLDKYNDKEKKNDKINNGDTKNSDDGKIDMDDKKYYNDDLKNSD. Positions 3090-3113 are enriched in low complexity; sequence NSNNNNNNNNTNNSNNSNNNNNIN. The span at 3316–3335 shows a compositional bias: acidic residues; that stretch reads YDDDNCDNYDNYDNDNENDN. Composition is skewed to basic and acidic residues over residues 3567–3579 and 3965–3974; these read KKEMQENEDEKIK and PSKDKSKHYN. The span at 3975-3992 shows a compositional bias: low complexity; that stretch reads DNNNNNNDDNNSNNNNDY. The segment covering 4079-4094 has biased composition (basic and acidic residues); it reads SKKDGSSNNDKNDNSN. Low complexity-rich tracts occupy residues 4095 to 4116 and 4124 to 4157; these read KNRNNYNNNDDNNNNDDNNNNN and NINNNYNNNNNNNNRNNSNSNNSNNSDNNNINYY. The span at 4906-4917 shows a compositional bias: polar residues; it reads YNIQNSDNSNIG. 2 stretches are compositionally biased toward low complexity: residues 4918–4942 and 4953–4972; these read DSELNVNVNDNDNSSCGSNSKDSLN and NSSSESGNTNSNNENSLRNS. Basic residues predominate over residues 5026-5045; the sequence is KIKKNKSYKNKTHKNKKQKN. A run of 5 helical transmembrane segments spans residues 5058–5078, 5106–5126, 5552–5572, 5716–5736, and 5815–5835; these read LYGYTLCLIGTKSIMCCCIIL, FIKLFFFIDIGISDVLIKYFA, EEILNIFSIMYLFRICIYYLG, LPIFLGIDVCRLVYWCCVVYI, and FLSYVFHCVNICGSSVINQII. Residues 5848 to 5917 are disordered; that stretch reads VNKNKGNDNV…NNNNVRNSNN (70 aa). An ANK 2 repeat occupies 6004–6032; sequence GINSLYVNGTNGNLKTDKILLHNFSNFDL. A TPR 4 repeat occupies 6051 to 6084; it reads LVHYFACAAYYIKRADVYNIMNYYNEHTHANFKQ. Disordered stretches follow at residues 6495–6527, 7123–7147, and 7183–7217; these read EEEKENENEKEVEKDENVHDEKDKVEQIEHEKK, EKKKKTGSNNIGSNTNIHELSDNNR, and NKNNTSSSSNNNNNNKNNNNNNDNNNDNDNICSNS. Residues 6501-6527 show a composition bias toward basic and acidic residues; that stretch reads ENEKEVEKDENVHDEKDKVEQIEHEKK. Over residues 7129 to 7147 the composition is skewed to polar residues; sequence GSNNIGSNTNIHELSDNNR. TPR repeat units follow at residues 7347-7380 and 7577-7610; these read SNDSSNYSLYYIGCKEFKLCIDSYDSIFPAKPFI and NNNNDSMNNHKDDMNNYNDNINNYVESMNNYDDI. The segment covering 7571 to 7583 has biased composition (low complexity); it reads DDGNNNNNNNDSM. Disordered regions lie at residues 7571-7590 and 7653-7712; these read DDGNNNNNNNDSMNNHKDDM and SNER…VNNI. The span at 7696–7706 shows a compositional bias: basic and acidic residues; sequence DNNKDKDDGNH. ANK repeat units follow at residues 7809–7839, 7845–7875, and 7880–7917; these read KYLTPLMLACRIGCEECVQNIIEKGKVNPNK, EKETPLMVAAQYGHSRIVCMLICVYGVQVNK, and GNTALHKILLNYSNTEGKKNSTIKIVQLLLKLGADLTI. Disordered stretches follow at residues 8208–8300 and 8413–8448; these read LKDD…SAKN and ALNSNMSNNNNNNNNSNNNNNNNSNNNNNNYNNNYN. The span at 8219–8259 shows a compositional bias: basic and acidic residues; that stretch reads YQKPYDKKVINKNKNDNYDKNDNYDKKDNYDTNDKNDKNNC. The segment covering 8277–8300 has biased composition (polar residues); sequence VMNTNSSGRRTISKNSPNLSSAKN. Over residues 8415–8448 the composition is skewed to low complexity; sequence NSNMSNNNNNNNNSNNNNNNNSNNNNNNYNNNYN. 2 TPR repeats span residues 8782–8815 and 9550–9584; these read QTCDKYIYKSEMKEEMYNKSNELYNNSLNNSNNI and DLPIQLSSYLFIKKLLKHDTCLKLWKECLKYITSS. 2 disordered regions span residues 9795–9818 and 9913–9979; these read MGSDNILKDGVHKDNNNQKGHKYD and NVLL…SKNT. 2 stretches are compositionally biased toward basic and acidic residues: residues 9800–9818 and 9913–9930; these read ILKDGVHKDNNNQKGHKYD and NVLLRDPHENENMRDDIR. Low complexity predominate over residues 9931-9971; sequence NNMNNNNNNNNNNNNNNNNNNNNNNNNNNNNNNNNNNNNLN. An HECT domain is found at 9938-10273; the sequence is NNNNNNNNNN…IKNCTAIDLD (336 aa). Cys10241 acts as the Glycyl thioester intermediate in catalysis.

The protein resides in the membrane. The enzyme catalyses S-ubiquitinyl-[E2 ubiquitin-conjugating enzyme]-L-cysteine + [acceptor protein]-L-lysine = [E2 ubiquitin-conjugating enzyme]-L-cysteine + N(6)-ubiquitinyl-[acceptor protein]-L-lysine.. It functions in the pathway protein modification; protein ubiquitination. Its function is as follows. Putative E3 ubiquitin-protein ligase. In Plasmodium falciparum (isolate 3D7), this protein is Putative E3 ubiquitin-protein ligase protein PFF1365c.